The following is a 241-amino-acid chain: Small ribosomal subunit protein uS2 (241 aa).

The protein belongs to the universal ribosomal protein uS2 family.

The polypeptide is Small ribosomal subunit protein uS2 (Hamiltonella defensa subsp. Acyrthosiphon pisum (strain 5AT)).